A 508-amino-acid chain; its full sequence is Photosystem II CP47 reaction center protein (508 aa).

A run of 6 helical transmembrane segments spans residues 21–36 (SVHI…WAGS), 101–115 (IAFS…IWHW), 140–156 (GIHL…FGAF), 203–218 (IAAG…FHLS), 237–252 (VLSS…AFVV), and 457–472 (SFAL…HGAR).

It belongs to the PsbB/PsbC family. PsbB subfamily. PSII is composed of 1 copy each of membrane proteins PsbA, PsbB, PsbC, PsbD, PsbE, PsbF, PsbH, PsbI, PsbJ, PsbK, PsbL, PsbM, PsbT, PsbX, PsbY, PsbZ, Psb30/Ycf12, at least 3 peripheral proteins of the oxygen-evolving complex and a large number of cofactors. It forms dimeric complexes. The cofactor is Binds multiple chlorophylls. PSII binds additional chlorophylls, carotenoids and specific lipids..

It localises to the plastid membrane. One of the components of the core complex of photosystem II (PSII). It binds chlorophyll and helps catalyze the primary light-induced photochemical processes of PSII. PSII is a light-driven water:plastoquinone oxidoreductase, using light energy to abstract electrons from H(2)O, generating O(2) and a proton gradient subsequently used for ATP formation. This Cuscuta reflexa (Southern Asian dodder) protein is Photosystem II CP47 reaction center protein.